The following is a 381-amino-acid chain: Translation initiation factor eIF2B subunit beta (381 aa).

Positions Leu-125–Thr-148 are disordered. The span at Lys-136 to Lys-145 shows a compositional bias: polar residues.

The protein belongs to the eIF-2B alpha/beta/delta subunits family. In terms of assembly, component of the translation initiation factor 2B (eIF2B) complex which is a heterodecamer of two sets of five different subunits: alpha, beta, gamma, delta and epsilon. Subunits alpha, beta and delta comprise a regulatory subcomplex and subunits epsilon and gamma comprise a catalytic subcomplex. Within the complex, the hexameric regulatory complex resides at the center, with the two heterodimeric catalytic subcomplexes bound on opposite sides.

It is found in the cytoplasm. The protein resides in the cytosol. In terms of biological role, acts as a component of the translation initiation factor 2B (eIF2B) complex, which catalyzes the exchange of GDP for GTP on the eukaryotic initiation factor 2 (eIF2) complex gamma subunit. Its guanine nucleotide exchange factor activity is repressed when bound to eIF2 complex phosphorylated on the alpha subunit, thereby limiting the amount of methionyl-initiator methionine tRNA available to the ribosome and consequently global translation is repressed. It activates the synthesis of GCN4 in yeast under amino acid starvation conditions by suppressing the inhibitory effects of multiple AUG codons present in the leader of GCN4 mRNA. It may promote either repression or activation of GCN4 expression depending on amino acid availability. GCD6 and GCD7 repress GCN4 expression at the translational level by ensuring that ribosomes which have translated UORF1 will reinitiate at UORF2, -3, or -4 and thus fail to reach the GCN4 start site. The protein is Translation initiation factor eIF2B subunit beta (GCD7) of Saccharomyces cerevisiae (strain ATCC 204508 / S288c) (Baker's yeast).